The chain runs to 302 residues: uncharacterized protein (302 aa).

Disordered regions lie at residues 1–167 (MPCR…QSSE) and 180–199 (PSLC…QRAS). The span at 39–54 (EESHAPSRDPRDHQGS) shows a compositional bias: basic and acidic residues. Polar residues-rich tracts occupy residues 123-133 (LSTSSCASVSR) and 183-197 (CPSQ…SPQR).

This is an uncharacterized protein from Homo sapiens (Human).